The chain runs to 213 residues: DNA-directed RNA polymerase subunit alpha (213 aa).

It belongs to the RNA polymerase alpha chain family. As to quaternary structure, in plastids the minimal PEP RNA polymerase catalytic core is composed of four subunits: alpha, beta, beta', and beta''. When a (nuclear-encoded) sigma factor is associated with the core the holoenzyme is formed, which can initiate transcription.

It is found in the plastid. It localises to the chloroplast. The catalysed reaction is RNA(n) + a ribonucleoside 5'-triphosphate = RNA(n+1) + diphosphate. DNA-dependent RNA polymerase catalyzes the transcription of DNA into RNA using the four ribonucleoside triphosphates as substrates. In Euglena stellata, this protein is DNA-directed RNA polymerase subunit alpha (rpoA).